Reading from the N-terminus, the 497-residue chain is Hexokinase-1 (497 aa).

The chain crosses the membrane as a helical span at residues 4 to 24; sequence ATVGAAVIGAATVCAVAALIV. One can recognise a Hexokinase domain in the interval 35-487; that stretch reads ARAMAILREF…SGIGAALLAA (453 aa). The segment at 90-228 is hexokinase small subdomain; that stretch reads TGDEAGVFYA…GVDMRVSALV (139 aa). Residues Gly104, Thr105, and Asn106 each contribute to the ADP site. Residues Thr194, Lys195, Asn229, and Asp230 each coordinate D-glucose. Positions 229-476 are hexokinase large subdomain; it reads NDTVGTLAGG…TSIVFEHSND (248 aa). ADP is bound at residue Thr253. Asn256, Glu284, and Glu315 together coordinate D-glucose. Residue Gly441 coordinates ADP.

Belongs to the hexokinase family.

The protein localises to the plastid. Its subcellular location is the chloroplast outer membrane. The enzyme catalyses a D-hexose + ATP = a D-hexose 6-phosphate + ADP + H(+). It carries out the reaction D-fructose + ATP = D-fructose 6-phosphate + ADP + H(+). The catalysed reaction is D-glucose + ATP = D-glucose 6-phosphate + ADP + H(+). It participates in carbohydrate metabolism; hexose metabolism. Its pathway is carbohydrate degradation; glycolysis; D-glyceraldehyde 3-phosphate and glycerone phosphate from D-glucose: step 1/4. Its function is as follows. Fructose and glucose phosphorylating enzyme. This chain is Hexokinase-1 (HXK1), found in Nicotiana tabacum (Common tobacco).